Reading from the N-terminus, the 463-residue chain is Putative glycine--tRNA ligase, cytoplasmic (463 aa).

Positions threonine 25–glutamate 54 are disordered. A compositionally biased stretch (basic and acidic residues) spans asparagine 44–glutamate 54. Substrate is bound by residues arginine 153 and glutamate 239. Residues arginine 271–glutamate 273 and leucine 281–phenylalanine 286 contribute to the ATP site. Substrate contacts are provided by residues phenylalanine 286 to glutamate 290 and asparagine 376. Glutamate 398 to cysteine 399 is an ATP binding site.

This sequence belongs to the class-II aminoacyl-tRNA synthetase family. In terms of assembly, homodimer.

It localises to the cytoplasm. The enzyme catalyses tRNA(Gly) + glycine + ATP = glycyl-tRNA(Gly) + AMP + diphosphate. Functionally, catalyzes the attachment of glycine to tRNA(Gly). Is also able produce diadenosine tetraphosphate (Ap4A), a universal pleiotropic signaling molecule needed for cell regulation pathways, by direct condensation of 2 ATPs. The sequence is that of Putative glycine--tRNA ligase, cytoplasmic from Arabidopsis thaliana (Mouse-ear cress).